A 454-amino-acid chain; its full sequence is L-cysteine desulfhydrase (454 aa).

Residues 1–25 (MEAGERRNGDSMSHNHRAPKKPRLA) are disordered. The segment covering 14 to 23 (HNHRAPKKPR) has biased composition (basic residues). Position 257 is an N6-(pyridoxal phosphate)lysine (K257).

This sequence belongs to the class-V pyridoxal-phosphate-dependent aminotransferase family. Pyridoxal 5'-phosphate is required as a cofactor. Highly expressed in stems and cauline leaves, and at lower levels in roots, rosette leaves and flowers.

The enzyme catalyses L-cysteine + H2O = hydrogen sulfide + pyruvate + NH4(+) + H(+). Functionally, catalyzes the production of hydrogen sulfide (H2S) from cysteine. Is mainly responsible for the degradation of cysteine to generate H2S, a regulator of stomatal movement and closure. The protein is L-cysteine desulfhydrase (LCD) of Arabidopsis thaliana (Mouse-ear cress).